Here is a 439-residue protein sequence, read N- to C-terminus: COBRA-like protein 7 (439 aa).

The N-terminal stretch at 1-22 (MDVDQLILFVFVCCLSSRFADA) is a signal peptide. N-linked (GlcNAc...) asparagine glycosylation is found at N138, N181, N186, N232, N312, and N346. N412 is lipidated: GPI-anchor amidated asparagine. A propeptide spans 413-439 (GGPDSRVSAAQLIASSCLLLPFIFLIM) (removed in mature form).

The protein belongs to the COBRA family.

It localises to the cell membrane. In terms of biological role, involved in determining the orientation of cell expansion, probably by playing an important role in cellulose deposition. May act by recruiting cellulose synthesizing complexes to discrete positions on the cell surface. This Oryza sativa subsp. japonica (Rice) protein is COBRA-like protein 7 (BC1LP1).